The primary structure comprises 79 residues: Small ribosomal subunit protein bS18 (79 aa).

Belongs to the bacterial ribosomal protein bS18 family. In terms of assembly, part of the 30S ribosomal subunit. Forms a tight heterodimer with protein bS6.

Functionally, binds as a heterodimer with protein bS6 to the central domain of the 16S rRNA, where it helps stabilize the platform of the 30S subunit. This is Small ribosomal subunit protein bS18 from Ureaplasma parvum serovar 3 (strain ATCC 27815 / 27 / NCTC 11736).